A 678-amino-acid chain; its full sequence is DNA ligase (678 aa).

Residues 36 to 40, 85 to 86, and E117 contribute to the NAD(+) site; these read DSEFD and SL. The active-site N6-AMP-lysine intermediate is the K119. Positions 140, 177, 294, and 318 each coordinate NAD(+). Residues C412, C415, C430, and C436 each contribute to the Zn(2+) site. One can recognise a BRCT domain in the interval 595–678; that stretch reads IIDAPLLGKT…TWWQHYGNAV (84 aa).

This sequence belongs to the NAD-dependent DNA ligase family. LigA subfamily. Requires Mg(2+) as cofactor. Mn(2+) is required as a cofactor.

The enzyme catalyses NAD(+) + (deoxyribonucleotide)n-3'-hydroxyl + 5'-phospho-(deoxyribonucleotide)m = (deoxyribonucleotide)n+m + AMP + beta-nicotinamide D-nucleotide.. In terms of biological role, DNA ligase that catalyzes the formation of phosphodiester linkages between 5'-phosphoryl and 3'-hydroxyl groups in double-stranded DNA using NAD as a coenzyme and as the energy source for the reaction. It is essential for DNA replication and repair of damaged DNA. This chain is DNA ligase, found in Dichelobacter nodosus (strain VCS1703A).